We begin with the raw amino-acid sequence, 616 residues long: Dihydroxy-acid dehydratase (616 aa).

D81 is a Mg(2+) binding site. Residue C122 coordinates [2Fe-2S] cluster. 2 residues coordinate Mg(2+): D123 and K124. An N6-carboxylysine modification is found at K124. C195 provides a ligand contact to [2Fe-2S] cluster. E491 is a Mg(2+) binding site. The active-site Proton acceptor is the S517.

It belongs to the IlvD/Edd family. In terms of assembly, homodimer. It depends on [2Fe-2S] cluster as a cofactor. Mg(2+) serves as cofactor.

It catalyses the reaction (2R)-2,3-dihydroxy-3-methylbutanoate = 3-methyl-2-oxobutanoate + H2O. The enzyme catalyses (2R,3R)-2,3-dihydroxy-3-methylpentanoate = (S)-3-methyl-2-oxopentanoate + H2O. It participates in amino-acid biosynthesis; L-isoleucine biosynthesis; L-isoleucine from 2-oxobutanoate: step 3/4. Its pathway is amino-acid biosynthesis; L-valine biosynthesis; L-valine from pyruvate: step 3/4. Functionally, functions in the biosynthesis of branched-chain amino acids. Catalyzes the dehydration of (2R,3R)-2,3-dihydroxy-3-methylpentanoate (2,3-dihydroxy-3-methylvalerate) into 2-oxo-3-methylpentanoate (2-oxo-3-methylvalerate) and of (2R)-2,3-dihydroxy-3-methylbutanoate (2,3-dihydroxyisovalerate) into 2-oxo-3-methylbutanoate (2-oxoisovalerate), the penultimate precursor to L-isoleucine and L-valine, respectively. The sequence is that of Dihydroxy-acid dehydratase from Salmonella agona (strain SL483).